Consider the following 292-residue polypeptide: Phosphoribulokinase, chromosomal (292 aa).

Residue 12 to 20 coordinates ATP; that stretch reads GSSGAGTTS.

The protein belongs to the phosphoribulokinase family. Homooctamer.

The catalysed reaction is D-ribulose 5-phosphate + ATP = D-ribulose 1,5-bisphosphate + ADP + H(+). It functions in the pathway carbohydrate biosynthesis; Calvin cycle. The protein is Phosphoribulokinase, chromosomal (cfxP) of Cupriavidus necator (strain ATCC 17699 / DSM 428 / KCTC 22496 / NCIMB 10442 / H16 / Stanier 337) (Ralstonia eutropha).